The primary structure comprises 341 residues: HTH-type transcriptional repressor PurR (341 aa).

The HTH lacI-type domain maps to alanine 2–valine 56. A DNA-binding region (H-T-H motif) is located at residues isoleucine 4–asparagine 23. A DNA-binding region spans residues serine 48–valine 56. Positions 73, 190, 192, 221, and 275 each coordinate hypoxanthine.

In terms of assembly, homodimer.

Its pathway is purine metabolism; purine nucleotide biosynthesis [regulation]. Is the main repressor of the genes involved in the de novo synthesis of purine nucleotides, regulating purB, purC, purEK, purF, purHD, purL, purMN and guaBA expression. PurR is allosterically activated to bind its cognate DNA by binding the purine corepressors, hypoxanthine or guanine, thereby effecting transcription repression. The protein is HTH-type transcriptional repressor PurR of Salmonella arizonae (strain ATCC BAA-731 / CDC346-86 / RSK2980).